A 166-amino-acid chain; its full sequence is 3-hydroxyacyl-[acyl-carrier-protein] dehydratase FabZ (166 aa).

The active site involves histidine 72.

It belongs to the thioester dehydratase family. FabZ subfamily.

The protein localises to the cytoplasm. The catalysed reaction is a (3R)-hydroxyacyl-[ACP] = a (2E)-enoyl-[ACP] + H2O. In terms of biological role, involved in unsaturated fatty acids biosynthesis. Catalyzes the dehydration of short chain beta-hydroxyacyl-ACPs and long chain saturated and unsaturated beta-hydroxyacyl-ACPs. The polypeptide is 3-hydroxyacyl-[acyl-carrier-protein] dehydratase FabZ (Synechococcus sp. (strain JA-3-3Ab) (Cyanobacteria bacterium Yellowstone A-Prime)).